A 407-amino-acid chain; its full sequence is Tyrosine--tRNA ligase 1 (407 aa).

Tyrosine 35 contributes to the L-tyrosine binding site. Positions 40–49 match the 'HIGH' region motif; sequence PTGDSLHVGH. Residues tyrosine 168 and glutamine 172 each contribute to the L-tyrosine site. The 'KMSKS' region signature appears at 228–232; that stretch reads KMGKT. Lysine 231 lines the ATP pocket. The 67-residue stretch at 340 to 406 folds into the S4 RNA-binding domain; the sequence is SSILDVLVHT…GKKKYYKIVI (67 aa).

The protein belongs to the class-I aminoacyl-tRNA synthetase family. TyrS type 1 subfamily. As to quaternary structure, homodimer.

The protein localises to the cytoplasm. The catalysed reaction is tRNA(Tyr) + L-tyrosine + ATP = L-tyrosyl-tRNA(Tyr) + AMP + diphosphate + H(+). Its function is as follows. Catalyzes the attachment of tyrosine to tRNA(Tyr) in a two-step reaction: tyrosine is first activated by ATP to form Tyr-AMP and then transferred to the acceptor end of tRNA(Tyr). The sequence is that of Tyrosine--tRNA ligase 1 from Clostridium acetobutylicum (strain ATCC 824 / DSM 792 / JCM 1419 / IAM 19013 / LMG 5710 / NBRC 13948 / NRRL B-527 / VKM B-1787 / 2291 / W).